Consider the following 178-residue polypeptide: Gamma-crystallin S (178 aa).

Ser2 carries the post-translational modification N-acetylserine. Positions Ser2–Gly5 are N-terminal arm. 2 consecutive Beta/gamma crystallin 'Greek key' domains span residues Thr6–Gly44 and Gly45–His87. The tract at residues Leu88–Gln93 is connecting peptide. Beta/gamma crystallin 'Greek key' domains lie at Tyr94–Glu134 and Gly135–Val177.

Belongs to the beta/gamma-crystallin family. As to quaternary structure, monomer.

Functionally, crystallins are the dominant structural components of the vertebrate eye lens. In Bos taurus (Bovine), this protein is Gamma-crystallin S (CRYGS).